A 452-amino-acid chain; its full sequence is Exoglucanase 1 (452 aa).

Positions 1–18 are cleaved as a signal peptide; that stretch reads MFSKFALTGSLLAGAVNA. Asn75 carries N-linked (GlcNAc...) asparagine glycosylation. The active-site Nucleophile is Glu230. The active-site Proton donor is Glu235. N-linked (GlcNAc...) asparagine glycans are attached at residues Asn335 and Asn360.

Belongs to the glycosyl hydrolase 7 (cellulase C) family.

It carries out the reaction Hydrolysis of (1-&gt;4)-beta-D-glucosidic linkages in cellulose and cellotetraose, releasing cellobiose from the non-reducing ends of the chains.. In terms of biological role, the biological conversion of cellulose to glucose generally requires three types of hydrolytic enzymes: (1) Endoglucanases which cut internal beta-1,4-glucosidic bonds; (2) Exocellobiohydrolases that cut the disaccharide cellobiose from the non-reducing end of the cellulose polymer chain; (3) Beta-1,4-glucosidases which hydrolyze the cellobiose and other short cello-oligosaccharides to glucose. In Cryphonectria parasitica (Chestnut blight fungus), this protein is Exoglucanase 1 (CBH-1).